Here is a 334-residue protein sequence, read N- to C-terminus: Small ribosomal subunit protein RACK1z (334 aa).

WD repeat units lie at residues 16–47 (GHND…LVWD), 73–103 (GHSH…RLWD), 115–145 (GHDK…KLWN), 163–195 (GHNG…KVWN), 207–237 (GHGG…LLWD), 248–277 (DAGS…KIWD), and 296–326 (NQML…RIYK).

This sequence belongs to the WD repeat G protein beta family. Ribosomal protein RACK1 subfamily. In terms of assembly, interacts with RAC1, RAC3, RAC6, RAR1, SGT1 and RBOHB. Homodimer and heterodimer with RACK1B. As to expression, widely expressed.

The protein localises to the cytoplasm. It localises to the cell membrane. Functionally, component of the RACK1 regulatory proteins that functions in innate immunity by interacting with multiple proteins in the RAC1 immune complex. Acts as a positive regulator of reactive oxygen species (ROS) production and is required for resistance against rice blast (M.grisea) infection. The protein is Small ribosomal subunit protein RACK1z (RACK1A) of Oryza sativa subsp. japonica (Rice).